The primary structure comprises 838 residues: Histidine biosynthesis trifunctional protein (838 aa).

The tract at residues 1 to 271 is phosphoribosyl-AMP cyclohydrolase; the sequence is MIFPILPVIS…MVEPRTGYGF (271 aa). The phosphoribosyl-ATP pyrophosphohydrolase stretch occupies residues 272 to 360; sequence CHRETKFTCF…VYFAMVWCIK (89 aa). The interval 361-838 is histidinol dehydrogenase; sequence HGVRLADIEK…IRMERMAETK (478 aa). Residues Q660 and H663 each contribute to the Zn(2+) site. Catalysis depends on residues E729 and H730. Zn(2+) is bound by residues D764 and H823.

In the C-terminal section; belongs to the histidinol dehydrogenase family. Zn(2+) is required as a cofactor.

The enzyme catalyses 1-(5-phospho-beta-D-ribosyl)-5'-AMP + H2O = 1-(5-phospho-beta-D-ribosyl)-5-[(5-phospho-beta-D-ribosylamino)methylideneamino]imidazole-4-carboxamide. It catalyses the reaction 1-(5-phospho-beta-D-ribosyl)-ATP + H2O = 1-(5-phospho-beta-D-ribosyl)-5'-AMP + diphosphate + H(+). The catalysed reaction is L-histidinol + 2 NAD(+) + H2O = L-histidine + 2 NADH + 3 H(+). Its pathway is amino-acid biosynthesis; L-histidine biosynthesis; L-histidine from 5-phospho-alpha-D-ribose 1-diphosphate: step 2/9. The protein operates within amino-acid biosynthesis; L-histidine biosynthesis; L-histidine from 5-phospho-alpha-D-ribose 1-diphosphate: step 3/9. It functions in the pathway amino-acid biosynthesis; L-histidine biosynthesis; L-histidine from 5-phospho-alpha-D-ribose 1-diphosphate: step 9/9. The polypeptide is Histidine biosynthesis trifunctional protein (HIS4) (Candida albicans (Yeast)).